We begin with the raw amino-acid sequence, 1066 residues long: FHIP family protein GI14169 (1066 aa).

Over residues 1 to 11 (MSWLRTSPLRQ) the composition is skewed to polar residues. Residues 1–35 (MSWLRTSPLRQSLTRSGSSSGNGSSGTATTMRQRP) form a disordered region. Over residues 12–30 (SLTRSGSSSGNGSSGTATT) the composition is skewed to low complexity. Residue Ser500 is modified to Phosphoserine. The interval 651–682 (GIDVTTTTTASASDTDLEHNNNSSSISSGRRD) is disordered. Residues 655–678 (TTTTTASASDTDLEHNNNSSSISS) are compositionally biased toward low complexity. Position 820 is a phosphoserine (Ser820). Disordered regions lie at residues 821-913 (PLHQ…GNSA) and 935-1007 (SGGE…TGNF). Low complexity predominate over residues 822 to 855 (LHQQLQHQQQHQQLAQTNSHTQQQQQQQQQQAQQ). A compositionally biased stretch (polar residues) spans 856 to 874 (RSTYATLSAATPVQASPTS). Residues 890–913 (SRSITSMFSRRSTSSTPASNGNSA) are compositionally biased toward low complexity. A compositionally biased stretch (polar residues) spans 947 to 971 (QDSTRGNTCETSLSTAPRQEPQTNV). The segment covering 972 to 997 (GSSSNSSIGSSTQTLSGTHSSSTLHG) has biased composition (low complexity).

The protein belongs to the FHIP family.

This is FHIP family protein GI14169 from Drosophila mojavensis (Fruit fly).